Reading from the N-terminus, the 338-residue chain is Anthranilate phosphoribosyltransferase (338 aa).

Residues Gly-81, 84–85, Ser-89, 91–94, 109–117, and Ala-121 each bind 5-phospho-alpha-D-ribose 1-diphosphate; these read GD, NVST, and KHGNRALSS. An anthranilate-binding site is contributed by Gly-81. Ser-93 contacts Mg(2+). Asn-112 is an anthranilate binding site. Residue Arg-167 participates in anthranilate binding. The Mg(2+) site is built by Asp-226 and Glu-227.

The protein belongs to the anthranilate phosphoribosyltransferase family. In terms of assembly, homodimer. It depends on Mg(2+) as a cofactor.

The catalysed reaction is N-(5-phospho-beta-D-ribosyl)anthranilate + diphosphate = 5-phospho-alpha-D-ribose 1-diphosphate + anthranilate. Its pathway is amino-acid biosynthesis; L-tryptophan biosynthesis; L-tryptophan from chorismate: step 2/5. Catalyzes the transfer of the phosphoribosyl group of 5-phosphorylribose-1-pyrophosphate (PRPP) to anthranilate to yield N-(5'-phosphoribosyl)-anthranilate (PRA). This chain is Anthranilate phosphoribosyltransferase, found in Rhodopseudomonas palustris (strain BisB5).